We begin with the raw amino-acid sequence, 448 residues long: 4-hydroxybenzoate transporter PcaK (448 aa).

The Cytoplasmic portion of the chain corresponds to 1–30; that stretch reads MNSPSLPAVERLDVQAFINAQPLSPYQWRI. A helical membrane pass occupies residues 31 to 51; sequence VLLCFLIVFLDGLDTAAMGFI. Residues 52 to 67 are Periplasmic-facing; that stretch reads APALTQDWGIDRASLG. The helical transmembrane segment at 68-88 threads the bilayer; sequence PVMSAALIGMVFGALGSGPLA. The Cytoplasmic segment spans residues 89-94; the sequence is DRYGRK. A helical membrane pass occupies residues 95–115; that stretch reads LVLVAAVFLFGLFSLASAYST. The Periplasmic segment spans residues 116-119; the sequence is NVEQ. A helical transmembrane segment spans residues 120–140; the sequence is LLALRFLTGLGLGAAMPNATT. Topologically, residues 141 to 152 are cytoplasmic; sequence LLSEYTPERLKS. Residues 153–173 form a helical membrane-spanning segment; that stretch reads LLVTSMFCGFNLGMACGGFVS. Topologically, residues 174–184 are periplasmic; sequence AKLIPLFGWHS. A helical membrane pass occupies residues 185 to 205; it reads LLLLGGLLPLVLAVVLLFRLP. The Cytoplasmic segment spans residues 206 to 261; the sequence is ESARYLVVRNRGSERVRQVLAPIAPAQVALARSFHVPEQQTVQARNVFAVIFSGTY. A helical transmembrane segment spans residues 262–282; sequence SAGTLLLWLTYFMGLVIVYLL. Residues 283 to 301 lie on the Periplasmic side of the membrane; that stretch reads TSWLPTLMRDSGASLEQAA. A helical transmembrane segment spans residues 302-322; the sequence is FIGALFQFGGVLSAVAVGWAM. The Cytoplasmic segment spans residues 323-329; it reads DRFNPHK. A helical transmembrane segment spans residues 330–350; the sequence is VIGLFYLLAGVFAWCVGQSLG. Residue Gln351 is a topological domain, periplasmic. A helical membrane pass occupies residues 352–372; that stretch reads VTLLATLVLLAGMCINGAQSA. Topologically, residues 373-398 are cytoplasmic; sequence MPSLAARFYPTQGRATGVSWMLGIGR. A helical transmembrane segment spans residues 399–419; it reads FGAILGAWIGATLLGLGWNFE. Over 420–421 the chain is Periplasmic; sequence QV. Residues 422 to 442 traverse the membrane as a helical segment; sequence LTALVLPAALATAAVLLKGLV. The Cytoplasmic segment spans residues 443–448; sequence SHADAG.

This sequence belongs to the major facilitator superfamily. Aromatic acid:H(+) symporter (AAHS) (TC 2.A.1.15) family.

It localises to the cell inner membrane. In terms of biological role, transports 4-hydroxybenzoate (4-HBA) and protocatechuate across the membrane. Driven by the proton motive force. Also functions as a chemoreceptor, which is required for chemotaxis to aromatic acids. The polypeptide is 4-hydroxybenzoate transporter PcaK (pcaK) (Pseudomonas aeruginosa (strain ATCC 15692 / DSM 22644 / CIP 104116 / JCM 14847 / LMG 12228 / 1C / PRS 101 / PAO1)).